We begin with the raw amino-acid sequence, 352 residues long: S-adenosylmethionine:tRNA ribosyltransferase-isomerase (352 aa).

It belongs to the QueA family. In terms of assembly, monomer.

The protein localises to the cytoplasm. It catalyses the reaction 7-aminomethyl-7-carbaguanosine(34) in tRNA + S-adenosyl-L-methionine = epoxyqueuosine(34) in tRNA + adenine + L-methionine + 2 H(+). Its pathway is tRNA modification; tRNA-queuosine biosynthesis. Transfers and isomerizes the ribose moiety from AdoMet to the 7-aminomethyl group of 7-deazaguanine (preQ1-tRNA) to give epoxyqueuosine (oQ-tRNA). In Solibacter usitatus (strain Ellin6076), this protein is S-adenosylmethionine:tRNA ribosyltransferase-isomerase.